The primary structure comprises 583 residues: Proline--tRNA ligase (583 aa).

The protein belongs to the class-II aminoacyl-tRNA synthetase family. ProS type 1 subfamily. As to quaternary structure, homodimer.

It localises to the cytoplasm. It carries out the reaction tRNA(Pro) + L-proline + ATP = L-prolyl-tRNA(Pro) + AMP + diphosphate. Catalyzes the attachment of proline to tRNA(Pro) in a two-step reaction: proline is first activated by ATP to form Pro-AMP and then transferred to the acceptor end of tRNA(Pro). As ProRS can inadvertently accommodate and process non-cognate amino acids such as alanine and cysteine, to avoid such errors it has two additional distinct editing activities against alanine. One activity is designated as 'pretransfer' editing and involves the tRNA(Pro)-independent hydrolysis of activated Ala-AMP. The other activity is designated 'posttransfer' editing and involves deacylation of mischarged Ala-tRNA(Pro). The misacylated Cys-tRNA(Pro) is not edited by ProRS. The sequence is that of Proline--tRNA ligase from Methylococcus capsulatus (strain ATCC 33009 / NCIMB 11132 / Bath).